Consider the following 236-residue polypeptide: Small ribosomal subunit protein uS2c (236 aa).

It belongs to the universal ribosomal protein uS2 family.

Its subcellular location is the plastid. The protein localises to the chloroplast. The chain is Small ribosomal subunit protein uS2c (rps2) from Chloranthus spicatus (Chulantree).